We begin with the raw amino-acid sequence, 680 residues long: ABC transporter B family member 24, mitochondrial (680 aa).

The N-terminal 75 residues, 1–75, are a transit peptide targeting the mitochondrion; the sequence is MMRVSQLQLC…MFFSTSTSAP (75 aa). An ABC transmembrane type-1 domain is found at 108–402; it reads VISAFACLVG…LGVVYSDTVQ (295 aa). The next 6 helical transmembrane spans lie at 109 to 129, 145 to 165, 232 to 252, 255 to 275, 340 to 360, and 376 to 396; these read ISAF…PFLF, NPYL…YGIA, AMVF…CILA, FGAV…AFTL, FALL…TAMV, and LVMV…LGVV. Residues 439–673 enclose the ABC transporter domain; sequence ISFENVHFSY…SGRYAKLWTQ (235 aa). ATP contacts are provided by residues Tyr448 and 472–483; that span reads GSSGSGKSTILR.

It belongs to the ABC transporter superfamily. ABCB family. Heavy Metal importer (TC 3.A.1.210) subfamily. In terms of assembly, homodimer. Mostly expressed at low levels in roots and flowers.

The protein resides in the mitochondrion inner membrane. Its function is as follows. Performs an essential function in the generation of cytoplasmic iron-sulfur proteins by mediating export of Fe/S cluster precursors synthesized by NFS1 and other mitochondrial proteins. Not involved in the export of cyclic pyranopterin monophosphate (cPMP) from mitochondria to the cytosol. The chain is ABC transporter B family member 24, mitochondrial (ABCB24) from Arabidopsis thaliana (Mouse-ear cress).